The following is a 257-amino-acid chain: tRNA (guanine-N(7)-)-methyltransferase (257 aa).

The tract at residues 1-58 (MQPIEQPGTGPDDITPESQDTNTAESAESGAETGHPRRIRSFVRRAGRTSTGQQRAIN) is disordered. Residues 16–26 (PESQDTNTAES) are compositionally biased toward polar residues. Basic residues predominate over residues 36–47 (PRRIRSFVRRAG). 4 residues coordinate S-adenosyl-L-methionine: Glu89, Glu114, Asp141, and Asp164. Asp164 is an active-site residue. Substrate is bound at residue Lys168. Residues 170–175 (RHNKRR) are interaction with RNA. Substrate contacts are provided by residues Asp200 and 235–238 (TKFE).

The protein belongs to the class I-like SAM-binding methyltransferase superfamily. TrmB family.

The enzyme catalyses guanosine(46) in tRNA + S-adenosyl-L-methionine = N(7)-methylguanosine(46) in tRNA + S-adenosyl-L-homocysteine. The protein operates within tRNA modification; N(7)-methylguanine-tRNA biosynthesis. Its function is as follows. Catalyzes the formation of N(7)-methylguanine at position 46 (m7G46) in tRNA. This is tRNA (guanine-N(7)-)-methyltransferase from Ralstonia pickettii (strain 12J).